Reading from the N-terminus, the 1164-residue chain is DNA-directed RNA polymerase subunit beta' (1164 aa).

The Zn(2+) site is built by cysteine 60, cysteine 62, cysteine 75, and cysteine 78. Aspartate 449, aspartate 451, and aspartate 453 together coordinate Mg(2+). Zn(2+) contacts are provided by cysteine 776, cysteine 850, cysteine 857, and cysteine 860.

It belongs to the RNA polymerase beta' chain family. As to quaternary structure, the RNAP catalytic core consists of 2 alpha, 1 beta, 1 beta' and 1 omega subunit. When a sigma factor is associated with the core the holoenzyme is formed, which can initiate transcription. Mg(2+) is required as a cofactor. It depends on Zn(2+) as a cofactor.

The enzyme catalyses RNA(n) + a ribonucleoside 5'-triphosphate = RNA(n+1) + diphosphate. In terms of biological role, DNA-dependent RNA polymerase catalyzes the transcription of DNA into RNA using the four ribonucleoside triphosphates as substrates. The sequence is that of DNA-directed RNA polymerase subunit beta' from Moorella thermoacetica (strain ATCC 39073 / JCM 9320).